The chain runs to 205 residues: Methylthioribulose-1-phosphate dehydratase (205 aa).

His-94 and His-96 together coordinate Zn(2+).

Belongs to the aldolase class II family. MtnB subfamily. Requires Zn(2+) as cofactor.

It carries out the reaction 5-(methylsulfanyl)-D-ribulose 1-phosphate = 5-methylsulfanyl-2,3-dioxopentyl phosphate + H2O. It functions in the pathway amino-acid biosynthesis; L-methionine biosynthesis via salvage pathway; L-methionine from S-methyl-5-thio-alpha-D-ribose 1-phosphate: step 2/6. In terms of biological role, catalyzes the dehydration of methylthioribulose-1-phosphate (MTRu-1-P) into 2,3-diketo-5-methylthiopentyl-1-phosphate (DK-MTP-1-P). The sequence is that of Methylthioribulose-1-phosphate dehydratase from Pectobacterium carotovorum subsp. carotovorum (strain PC1).